The primary structure comprises 340 residues: Protein-arginine kinase (340 aa).

Residues 21-242 enclose the Phosphagen kinase C-terminal domain; it reads VVLSSRIRLA…EQIIMQERVA (222 aa). ATP-binding positions include 24–28, histidine 79, arginine 113, 164–168, and 195–200; these read SSRIR, RASVM, and RGIYGE.

Belongs to the ATP:guanido phosphotransferase family.

The catalysed reaction is L-arginyl-[protein] + ATP = N(omega)-phospho-L-arginyl-[protein] + ADP + H(+). Functionally, catalyzes the specific phosphorylation of arginine residues in proteins. This chain is Protein-arginine kinase, found in Listeria welshimeri serovar 6b (strain ATCC 35897 / DSM 20650 / CCUG 15529 / CIP 8149 / NCTC 11857 / SLCC 5334 / V8).